The sequence spans 150 residues: UPF0756 membrane protein PC1_1142 (150 aa).

A run of 4 helical transmembrane segments spans residues 1 to 21 (MAYLDPTLLILLVLAGLGIIS), 51 to 71 (YGLSIGIVILTIGVMAPIASG), 82 to 102 (FLHWKSLLAILIGVAVSWLGG), and 127 to 147 (ALFRGVPVGPLIAAGLLSLLI).

It belongs to the UPF0756 family.

The protein localises to the cell membrane. The sequence is that of UPF0756 membrane protein PC1_1142 from Pectobacterium carotovorum subsp. carotovorum (strain PC1).